Here is a 396-residue protein sequence, read N- to C-terminus: Phosphoglycerate kinase (396 aa).

Residues 23–25 (DFN), Arg-38, 61–64 (HMGK), Arg-122, and Arg-155 contribute to the substrate site. ATP-binding positions include Lys-206, Gly-296, Glu-327, and 353-356 (GGDS).

Belongs to the phosphoglycerate kinase family. As to quaternary structure, monomer.

The protein localises to the cytoplasm. It carries out the reaction (2R)-3-phosphoglycerate + ATP = (2R)-3-phospho-glyceroyl phosphate + ADP. Its pathway is carbohydrate degradation; glycolysis; pyruvate from D-glyceraldehyde 3-phosphate: step 2/5. The chain is Phosphoglycerate kinase from Clostridium botulinum (strain Alaska E43 / Type E3).